We begin with the raw amino-acid sequence, 1705 residues long: Homeobox-DDT domain protein RLT1 (1705 aa).

Disordered stretches follow at residues 1–53, 118–167, 237–267, 296–322, and 352–414; these read MEMG…QLET, ELPA…EYET, HDPR…TPNM, GPVP…MPSP, and GVRK…RKEE. Residues 39-98 constitute a DNA-binding region (homeobox); that stretch reads VKPKRQMKTPFQLETLEKVYSEEKYPSEATRAELSEKLDLSDRQLQMWFCHRRLKDKKDG. Over residues 136–159 the composition is skewed to low complexity; the sequence is GSESGCSPYSNSRRNFASGSSSSR. 2 stretches are compositionally biased toward polar residues: residues 253–265 and 310–319; these read EQQS…SFTP and RNCSTSQQDM. The DDT domain occupies 549–608; sequence DETVGNLLMVWRFLISFSDVLDLWPFTLDEFIQAFHDYDSRLLGEIHVTLLRSIIRDVED. The HTH HARE-type domain maps to 731–800; that stretch reads GTVKFAAFHV…APSTYCVRAP (70 aa). Disordered regions lie at residues 1028 to 1053, 1198 to 1229, 1441 to 1502, 1561 to 1635, and 1652 to 1705; these read TRER…DLSN, VNHS…SIRV, PEDE…KAQS, PKSE…FVDY, and AIEE…SSDS. Positions 1201–1220 are enriched in low complexity; the sequence is SPTDSVSPSSSAISGSNSDS. Positions 1455–1465 are enriched in basic and acidic residues; it reads SPFKGKGPREQ. Composition is skewed to acidic residues over residues 1565–1574, 1611–1628, and 1669–1684; these read EVEEDEEEEE, VDDE…DEDG, and GEDD…DDDV.

As to quaternary structure, interacts with CHR11 and CHR17. Interacts (via the DDT domain) with CHR11 (via C-terminus). In terms of tissue distribution, highly expressed in growing tissues such as inflorescence and flower meristems, young leaves and floral organs. Expressed in roots, rosette and cauline leaves, stems, flowers, inflorescences and siliques.

The protein localises to the nucleus. Its function is as follows. Transcriptional regulator required for the maintenance of the plant vegetative phase. In association with CHR11 or CHR17 may prevent the early activation of the vegetative-to-reproductive transition by regulating key genes that contribute to flower timing, such as FT, SEP1, SEP3, AGL8/FUL, SOC1 and FLC. The protein is Homeobox-DDT domain protein RLT1 of Arabidopsis thaliana (Mouse-ear cress).